Here is a 473-residue protein sequence, read N- to C-terminus: Photosystem II CP43 reaction center protein (473 aa).

The propeptide occupies 1–14 (MKILYSLRRFYHVE). T15 is modified (N-acetylthreonine). Position 15 is a phosphothreonine (T15). Transmembrane regions (helical) follow at residues 69–93 (LFEV…PHLA), 134–155 (LLGP…QDRN), 178–200 (KALY…RKIT), 255–275 (KPFA…LSYS), and 291–312 (WFNN…ASQA). Position 367 (E367) interacts with [CaMn4O5] cluster. A helical membrane pass occupies residues 447–471 (RARAAAAGFEKGIDRDLEPVVYMTP).

This sequence belongs to the PsbB/PsbC family. PsbC subfamily. In terms of assembly, PSII is composed of 1 copy each of membrane proteins PsbA, PsbB, PsbC, PsbD, PsbE, PsbF, PsbH, PsbI, PsbJ, PsbK, PsbL, PsbM, PsbT, PsbX, PsbY, PsbZ, Psb30/Ycf12, at least 3 peripheral proteins of the oxygen-evolving complex and a large number of cofactors. It forms dimeric complexes. It depends on Binds multiple chlorophylls and provides some of the ligands for the Ca-4Mn-5O cluster of the oxygen-evolving complex. It may also provide a ligand for a Cl- that is required for oxygen evolution. PSII binds additional chlorophylls, carotenoids and specific lipids. as a cofactor. Phosphorylated in both bundle sheath and mesophyll cells, phosphorylation increases when cells are grown under high rather than low light regimes (70 vs 900 umol photons/m-2/s).

The protein resides in the plastid. Its subcellular location is the chloroplast thylakoid membrane. Functionally, one of the components of the core complex of photosystem II (PSII). It binds chlorophyll and helps catalyze the primary light-induced photochemical processes of PSII. PSII is a light-driven water:plastoquinone oxidoreductase, using light energy to abstract electrons from H(2)O, generating O(2) and a proton gradient subsequently used for ATP formation. This Zea mays (Maize) protein is Photosystem II CP43 reaction center protein.